Consider the following 261-residue polypeptide: Imidazole glycerol phosphate synthase subunit HisF (261 aa).

Active-site residues include Asp-16 and Asp-135.

Belongs to the HisA/HisF family. In terms of assembly, heterodimer of HisH and HisF.

The protein localises to the cytoplasm. The catalysed reaction is 5-[(5-phospho-1-deoxy-D-ribulos-1-ylimino)methylamino]-1-(5-phospho-beta-D-ribosyl)imidazole-4-carboxamide + L-glutamine = D-erythro-1-(imidazol-4-yl)glycerol 3-phosphate + 5-amino-1-(5-phospho-beta-D-ribosyl)imidazole-4-carboxamide + L-glutamate + H(+). The protein operates within amino-acid biosynthesis; L-histidine biosynthesis; L-histidine from 5-phospho-alpha-D-ribose 1-diphosphate: step 5/9. In terms of biological role, IGPS catalyzes the conversion of PRFAR and glutamine to IGP, AICAR and glutamate. The HisF subunit catalyzes the cyclization activity that produces IGP and AICAR from PRFAR using the ammonia provided by the HisH subunit. The polypeptide is Imidazole glycerol phosphate synthase subunit HisF (Mycolicibacterium vanbaalenii (strain DSM 7251 / JCM 13017 / BCRC 16820 / KCTC 9966 / NRRL B-24157 / PYR-1) (Mycobacterium vanbaalenii)).